A 499-amino-acid polypeptide reads, in one-letter code: Lysine--tRNA ligase (499 aa).

Residues glutamate 409 and glutamate 416 each coordinate Mg(2+).

The protein belongs to the class-II aminoacyl-tRNA synthetase family. In terms of assembly, homodimer. Mg(2+) serves as cofactor.

Its subcellular location is the cytoplasm. It catalyses the reaction tRNA(Lys) + L-lysine + ATP = L-lysyl-tRNA(Lys) + AMP + diphosphate. The sequence is that of Lysine--tRNA ligase from Thioalkalivibrio sulfidiphilus (strain HL-EbGR7).